A 480-amino-acid chain; its full sequence is Protein nucleotidyltransferase YdiU (480 aa).

ATP-binding residues include Gly-87, Gly-89, Arg-90, Lys-110, Asp-122, Gly-123, Arg-173, and Arg-180. Asp-245 acts as the Proton acceptor in catalysis. 2 residues coordinate Mg(2+): Asn-246 and Asp-255. Asp-255 is a binding site for ATP.

It belongs to the SELO family. The cofactor is Mg(2+). Mn(2+) serves as cofactor.

It carries out the reaction L-seryl-[protein] + ATP = 3-O-(5'-adenylyl)-L-seryl-[protein] + diphosphate. The enzyme catalyses L-threonyl-[protein] + ATP = 3-O-(5'-adenylyl)-L-threonyl-[protein] + diphosphate. It catalyses the reaction L-tyrosyl-[protein] + ATP = O-(5'-adenylyl)-L-tyrosyl-[protein] + diphosphate. The catalysed reaction is L-histidyl-[protein] + UTP = N(tele)-(5'-uridylyl)-L-histidyl-[protein] + diphosphate. It carries out the reaction L-seryl-[protein] + UTP = O-(5'-uridylyl)-L-seryl-[protein] + diphosphate. The enzyme catalyses L-tyrosyl-[protein] + UTP = O-(5'-uridylyl)-L-tyrosyl-[protein] + diphosphate. In terms of biological role, nucleotidyltransferase involved in the post-translational modification of proteins. It can catalyze the addition of adenosine monophosphate (AMP) or uridine monophosphate (UMP) to a protein, resulting in modifications known as AMPylation and UMPylation. The protein is Protein nucleotidyltransferase YdiU of Jannaschia sp. (strain CCS1).